The sequence spans 261 residues: Cytosolic Fe-S cluster assembly factor Nubp2 homolog (261 aa).

Gly14–Ser21 contributes to the ATP binding site. Residues Cys188 and Cys191 each coordinate [4Fe-4S] cluster.

This sequence belongs to the Mrp/NBP35 ATP-binding proteins family. NUBP2/CFD1 subfamily. As to quaternary structure, heterotetramer of 2 Nubp1 and 2 Nubp2 chains. The cofactor is [4Fe-4S] cluster.

The protein localises to the cytoplasm. Its function is as follows. Component of the cytosolic iron-sulfur (Fe/S) protein assembly (CIA) machinery. Required for maturation of extramitochondrial Fe-S proteins. The Nubp1-Nubp2 heterotetramer forms a Fe-S scaffold complex, mediating the de novo assembly of an Fe-S cluster and its transfer to target apoproteins. The polypeptide is Cytosolic Fe-S cluster assembly factor Nubp2 homolog (Drosophila willistoni (Fruit fly)).